Consider the following 145-residue polypeptide: D-aminoacyl-tRNA deacylase (145 aa).

The short motif at Gly-137–Pro-138 is the Gly-cisPro motif, important for rejection of L-amino acids element.

This sequence belongs to the DTD family. Homodimer.

Its subcellular location is the cytoplasm. It catalyses the reaction glycyl-tRNA(Ala) + H2O = tRNA(Ala) + glycine + H(+). The enzyme catalyses a D-aminoacyl-tRNA + H2O = a tRNA + a D-alpha-amino acid + H(+). An aminoacyl-tRNA editing enzyme that deacylates mischarged D-aminoacyl-tRNAs. Also deacylates mischarged glycyl-tRNA(Ala), protecting cells against glycine mischarging by AlaRS. Acts via tRNA-based rather than protein-based catalysis; rejects L-amino acids rather than detecting D-amino acids in the active site. By recycling D-aminoacyl-tRNA to D-amino acids and free tRNA molecules, this enzyme counteracts the toxicity associated with the formation of D-aminoacyl-tRNA entities in vivo and helps enforce protein L-homochirality. The sequence is that of D-aminoacyl-tRNA deacylase from Stutzerimonas stutzeri (strain A1501) (Pseudomonas stutzeri).